Consider the following 150-residue polypeptide: Deoxyuridine 5'-triphosphate nucleotidohydrolase (150 aa).

Residues 69-71 (RSG), Asn82, and 86-88 (LID) each bind substrate.

Belongs to the dUTPase family. The cofactor is Mg(2+).

It carries out the reaction dUTP + H2O = dUMP + diphosphate + H(+). Its pathway is pyrimidine metabolism; dUMP biosynthesis; dUMP from dCTP (dUTP route): step 2/2. This enzyme is involved in nucleotide metabolism: it produces dUMP, the immediate precursor of thymidine nucleotides and it decreases the intracellular concentration of dUTP so that uracil cannot be incorporated into DNA. The protein is Deoxyuridine 5'-triphosphate nucleotidohydrolase of Chromobacterium violaceum (strain ATCC 12472 / DSM 30191 / JCM 1249 / CCUG 213 / NBRC 12614 / NCIMB 9131 / NCTC 9757 / MK).